The primary structure comprises 363 residues: L-arabinitol 4-dehydrogenase (363 aa).

Zn(2+) is bound by residues Cys-53, His-78, Glu-79, Cys-108, Cys-111, Cys-114, Cys-122, and Glu-163. NAD(+)-binding positions include 190-191 (PI), Asp-211, Arg-216, Ile-282, and 306-308 (QYR).

This sequence belongs to the zinc-containing alcohol dehydrogenase family. Homotetramer. Zn(2+) serves as cofactor.

It carries out the reaction L-arabinitol + NAD(+) = L-xylulose + NADH + H(+). It participates in carbohydrate degradation; L-arabinose degradation via L-arabinitol; D-xylulose 5-phosphate from L-arabinose (fungal route): step 2/5. Catalyzes the NAD-dependent oxidation of L-arabinitol to L-xylulose in the fungal L-arabinose catabolic pathway. L-arabinose catabolism is important for using plant material as a carbon source. Not active on D-arabinitol, D-sorbitol and D-mannitol. The chain is L-arabinitol 4-dehydrogenase (ard-1) from Neurospora crassa (strain ATCC 24698 / 74-OR23-1A / CBS 708.71 / DSM 1257 / FGSC 987).